The primary structure comprises 378 residues: Erythronate-4-phosphate dehydrogenase (378 aa).

The substrate site is built by Ser-45 and Thr-66. Residues Asp-146 and Thr-175 each coordinate NAD(+). The active site involves Arg-208. Asp-232 provides a ligand contact to NAD(+). Glu-237 is an active-site residue. Catalysis depends on His-254, which acts as the Proton donor. Position 257 (Gly-257) interacts with NAD(+). A substrate-binding site is contributed by Tyr-258.

The protein belongs to the D-isomer specific 2-hydroxyacid dehydrogenase family. PdxB subfamily. In terms of assembly, homodimer.

It is found in the cytoplasm. The catalysed reaction is 4-phospho-D-erythronate + NAD(+) = (R)-3-hydroxy-2-oxo-4-phosphooxybutanoate + NADH + H(+). The protein operates within cofactor biosynthesis; pyridoxine 5'-phosphate biosynthesis; pyridoxine 5'-phosphate from D-erythrose 4-phosphate: step 2/5. Its function is as follows. Catalyzes the oxidation of erythronate-4-phosphate to 3-hydroxy-2-oxo-4-phosphonooxybutanoate. The protein is Erythronate-4-phosphate dehydrogenase of Escherichia coli O7:K1 (strain IAI39 / ExPEC).